The sequence spans 609 residues: UvrABC system protein C (609 aa).

Residues 19 to 97 (ASPGCYLWKS…IKKHNPRFNV (79 aa)) enclose the GIY-YIG domain. The region spanning 208-243 (ESLVSDLNIKMSNASERLDFEKAARYRDMLQRIQNF) is the UVR domain.

It belongs to the UvrC family. In terms of assembly, interacts with UvrB in an incision complex.

It is found in the cytoplasm. Its function is as follows. The UvrABC repair system catalyzes the recognition and processing of DNA lesions. UvrC both incises the 5' and 3' sides of the lesion. The N-terminal half is responsible for the 3' incision and the C-terminal half is responsible for the 5' incision. The sequence is that of UvrABC system protein C from Leptospira interrogans serogroup Icterohaemorrhagiae serovar copenhageni (strain Fiocruz L1-130).